Consider the following 206-residue polypeptide: Thymidylate kinase (206 aa).

An ATP-binding site is contributed by 11–18 (GIDGAGKT).

This sequence belongs to the thymidylate kinase family.

The enzyme catalyses dTMP + ATP = dTDP + ADP. In terms of biological role, phosphorylation of dTMP to form dTDP in both de novo and salvage pathways of dTTP synthesis. This chain is Thymidylate kinase, found in Burkholderia cenocepacia (strain HI2424).